Here is a 247-residue protein sequence, read N- to C-terminus: ATP synthase subunit a, chloroplastic (247 aa).

5 helical membrane-spanning segments follow: residues 38–58 (QVLITSWVVIAILLGSAAIAV), 95–115 (VPFIGTMFLFIFVSNWSGALL), 134–154 (INTTVALALPTSVAYFYAGLT), 199–219 (LVVVVLVSLVPSVVPIPVMFL), and 220–240 (GLFTSSIQALIFATLAAAYIG).

This sequence belongs to the ATPase A chain family. In terms of assembly, F-type ATPases have 2 components, CF(1) - the catalytic core - and CF(0) - the membrane proton channel. CF(1) has five subunits: alpha(3), beta(3), gamma(1), delta(1), epsilon(1). CF(0) has four main subunits: a, b, b' and c.

The protein localises to the plastid. The protein resides in the chloroplast thylakoid membrane. Key component of the proton channel; it plays a direct role in the translocation of protons across the membrane. This chain is ATP synthase subunit a, chloroplastic, found in Illicium oligandrum (Star anise).